The primary structure comprises 245 residues: Deoxyadenosine kinase (245 aa).

28 to 36 is a binding site for ATP; the sequence is GLIGAGKTT. The substrate site is built by E52, Y64, and Q75. Residue D99 is the Proton acceptor of the active site. Substrate is bound by residues R100, D105, and E165.

This sequence belongs to the DCK/DGK family.

The catalysed reaction is 2'-deoxyadenosine + ATP = dAMP + ADP + H(+). Functionally, specific kinase that phosphorylates deoxyadenosine but not any other deoxyribonucleoside, as part of the deoxyribonucleotide salvage pathway. This is Deoxyadenosine kinase (dak) from Dictyostelium discoideum (Social amoeba).